A 257-amino-acid polypeptide reads, in one-letter code: NAD-capped RNA hydrolase NudC (257 aa).

Arg-69 lines the substrate pocket. Zn(2+) is bound by residues Cys-98 and Cys-101. Position 111 (Glu-111) interacts with substrate. Positions 116 and 119 each coordinate Zn(2+). Tyr-124 is a binding site for substrate. Positions 125–248 (PQIAPCIIVA…TVARRLIEDT (124 aa)) constitute a Nudix hydrolase domain. Residues Ala-158, Glu-174, and Glu-178 each coordinate a divalent metal cation. The Nudix box signature appears at 159-180 (GFVEVGETLEQAVAREVMEESG). A substrate-binding site is contributed by 192–199 (QPWPFPQS). Glu-219 contributes to the a divalent metal cation binding site. Ala-241 lines the substrate pocket.

It belongs to the Nudix hydrolase family. NudC subfamily. As to quaternary structure, homodimer. It depends on Mg(2+) as a cofactor. Mn(2+) serves as cofactor. Requires Zn(2+) as cofactor.

The enzyme catalyses a 5'-end NAD(+)-phospho-ribonucleoside in mRNA + H2O = a 5'-end phospho-adenosine-phospho-ribonucleoside in mRNA + beta-nicotinamide D-ribonucleotide + 2 H(+). It catalyses the reaction NAD(+) + H2O = beta-nicotinamide D-ribonucleotide + AMP + 2 H(+). It carries out the reaction NADH + H2O = reduced beta-nicotinamide D-ribonucleotide + AMP + 2 H(+). Functionally, mRNA decapping enzyme that specifically removes the nicotinamide adenine dinucleotide (NAD) cap from a subset of mRNAs by hydrolyzing the diphosphate linkage to produce nicotinamide mononucleotide (NMN) and 5' monophosphate mRNA. The NAD-cap is present at the 5'-end of some mRNAs and stabilizes RNA against 5'-processing. Has preference for mRNAs with a 5'-end purine. Catalyzes the hydrolysis of a broad range of dinucleotide pyrophosphates. This chain is NAD-capped RNA hydrolase NudC, found in Salmonella schwarzengrund (strain CVM19633).